The chain runs to 252 residues: Intraflagellar transport associated protein 2 (252 aa).

GTP contacts are provided by residues 35–42 (GPPKAGKT) and 118–125 (WDVSGDKK).

Belongs to the small GTPase superfamily. Rab family. Component of the IFT complex B composed of at least che-2, che-13, dyf-1, dyf-3, dyf-6, dyf-11, dyf-13, ift-20, ift-74, ift-81, ifta-2, osm-1, osm-5 and osm-6. As to expression, ciliated sensory neurons.

Its subcellular location is the cytoplasm. It localises to the cytoskeleton. The protein resides in the cilium axoneme. Functionally, component of the intraflagellar transport (IFT) complex B required for transport of proteins in the motile cilium. May be required for ciliary entrance and transport of specific ciliary cargo proteins such as che-3 which are related to motility. Regulates specific signaling activities in the cilia, such as the daf-2/insulin receptor-like transduction pathway. This chain is Intraflagellar transport associated protein 2, found in Caenorhabditis elegans.